We begin with the raw amino-acid sequence, 132 residues long: Small ribosomal subunit protein uS8 (132 aa).

The protein belongs to the universal ribosomal protein uS8 family. Part of the 30S ribosomal subunit. Contacts proteins S5 and S12.

One of the primary rRNA binding proteins, it binds directly to 16S rRNA central domain where it helps coordinate assembly of the platform of the 30S subunit. This chain is Small ribosomal subunit protein uS8, found in Enterococcus faecalis (strain ATCC 700802 / V583).